A 663-amino-acid polypeptide reads, in one-letter code: Alpha-amylase MalA (663 aa).

Disordered stretches follow at residues 1 to 28 (MHHP…PTAT) and 80 to 135 (GTLE…LTLR). Positions 92 to 111 (RSGGHSGGVSGGRSGPGRSG) are enriched in gly residues. The active-site Nucleophile is the D411. The active-site Proton donor is E440.

It belongs to the glycosyl hydrolase 13 family.

The protein resides in the cytoplasm. The enzyme catalyses Endohydrolysis of (1-&gt;4)-alpha-D-glucosidic linkages in polysaccharides containing three or more (1-&gt;4)-alpha-linked D-glucose units.. It functions in the pathway glycan degradation; starch degradation. With respect to regulation, stable and active over a broad range of NaCl concentrations (0.5 to 4.2 M NaCl), with maximal activity at 2.6 M NaCl. 83% and 94% of the maximum activity at 0.6 and 4.2 M NaCl, respectively. Active and stable also in KCl. Alpha-amylase that cleaves starch into oligosaccharides, the first step in starch degradation. Endo-acting enzyme which prefers a linear polysaccharide to branched polysaccharides hydrolyzing alpha-1,4 glucosidic bonds efficiently. Also has transglycosylation activity, but does not act on alpha-1,6 bonds. Higher activities of 100%, 79% and 67.8% against amylose, soluble starch and amylopectin, respectively. Lower activity of 22% against glycogen and faint or no activity against alpha-, beta- and gamma-cyclodextrin. This is Alpha-amylase MalA from Haloarcula japonica (strain ATCC 49778 / DSM 6131 / JCM 7785 / NBRC 101032 / NCIMB 13157 / TR-1).